Here is a 253-residue protein sequence, read N- to C-terminus: Small ribosomal subunit protein uS2 (253 aa).

The protein belongs to the universal ribosomal protein uS2 family.

This chain is Small ribosomal subunit protein uS2, found in Cereibacter sphaeroides (strain ATCC 17023 / DSM 158 / JCM 6121 / CCUG 31486 / LMG 2827 / NBRC 12203 / NCIMB 8253 / ATH 2.4.1.) (Rhodobacter sphaeroides).